The primary structure comprises 418 residues: Probable carboxypeptidase AO090166000075 (418 aa).

An N-terminal signal peptide occupies residues 1 to 18; the sequence is MKATDLFHVTALVAGALA. Asparagine 74 carries N-linked (GlcNAc...) asparagine glycosylation. Aspartate 147 provides a ligand contact to Zn(2+). Asparagine 168 carries an N-linked (GlcNAc...) asparagine glycan. Glutamate 179 acts as the Proton acceptor in catalysis. Glutamate 180 serves as a coordination point for Zn(2+).

Belongs to the peptidase M20A family. Zn(2+) is required as a cofactor.

It localises to the secreted. This Aspergillus oryzae (strain ATCC 42149 / RIB 40) (Yellow koji mold) protein is Probable carboxypeptidase AO090166000075.